Reading from the N-terminus, the 251-residue chain is Tryptophan synthase alpha chain (251 aa).

Catalysis depends on proton acceptor residues Glu-46 and Asp-57.

This sequence belongs to the TrpA family. In terms of assembly, tetramer of two alpha and two beta chains.

It carries out the reaction (1S,2R)-1-C-(indol-3-yl)glycerol 3-phosphate + L-serine = D-glyceraldehyde 3-phosphate + L-tryptophan + H2O. It functions in the pathway amino-acid biosynthesis; L-tryptophan biosynthesis; L-tryptophan from chorismate: step 5/5. Functionally, the alpha subunit is responsible for the aldol cleavage of indoleglycerol phosphate to indole and glyceraldehyde 3-phosphate. The sequence is that of Tryptophan synthase alpha chain from Karelsulcia muelleri (strain GWSS) (Sulcia muelleri).